Consider the following 455-residue polypeptide: Probable hexose phosphate transport protein (455 aa).

Helical transmembrane passes span 34–54 (IFYS…SFTF), 70–90 (LGII…VSGV), 113–133 (IFFG…LNGW), 161–181 (VWST…GFII), and 185–205 (GWRG…LVLI). The segment at 219–242 (PIEKYKRDPHHAHHEGKSASEGTE) is disordered. Helical transmembrane passes span 257 to 277 (YVLT…IYIV), 302 to 322 (FCVS…GWLS), 331 to 351 (GPMN…MWFS), 363 to 383 (LLFV…LAAA), 394 to 414 (ASGF…YPLG), and 424 to 444 (GFFI…LPTW).

The protein belongs to the major facilitator superfamily. Organophosphate:Pi antiporter (OPA) (TC 2.A.1.4) family.

It localises to the cell membrane. Functionally, transport protein for sugar phosphate uptake. The protein is Probable hexose phosphate transport protein (uhpC) of Chlamydia pneumoniae (Chlamydophila pneumoniae).